A 572-amino-acid polypeptide reads, in one-letter code: Nuclear hormone receptor family member nhr-25 (572 aa).

The nuclear receptor DNA-binding region spans 15–90 (GEMCPVCGDR…MGMKMEAVRA (76 aa)). NR C4-type zinc fingers lie at residues 18 to 38 (CPVC…CESC) and 54 to 78 (CSAE…FQKC). Residues 307-567 (PTEKTVDHFY…PTPQATYTAV (261 aa)) form the NR LBD domain.

The protein belongs to the nuclear hormone receptor family. Interacts with lin-39. Interacts with nob-1. As to expression, expressed in the epidermis, the developing somatic gonad, and a subset of other epithelial cells.

Its subcellular location is the nucleus. Its function is as follows. Orphan nuclear receptor and probable transcription activator, required during development. Plays a role in male tail tip morphogenesis regulating the expression of the transcription factor dmd-3 in a negative feedback loop. Regulates vulval precursor cell (VPC) differentiation, in concert with homeobox protein lin-39. Involved in promoting embryogenesis, in concert with homeobox protein nob-1. May play a role in modulation of lifespan and immunity. This chain is Nuclear hormone receptor family member nhr-25, found in Caenorhabditis elegans.